Here is a 287-residue protein sequence, read N- to C-terminus: Undecaprenyl-diphosphatase (287 aa).

The next 7 helical transmembrane spans lie at 6–26 (LHLLKAFFLGIVEGLTEFIPV), 45–65 (SGKVFEVVIQFGSILAVMWIF), 89–109 (NLLLAFLPAAVIGAIFIKSIK), 111–131 (VFYHPGVVAVTLVVGGFIMLW), 204–224 (ATEFSFFLAMPTMLGAAVYDL), 238–258 (AIAVGFVAAFLSALVVVRAVL), and 266–286 (YRVFAWYRIALGLVVAAWIYA).

It belongs to the UppP family.

The protein localises to the cell inner membrane. It catalyses the reaction di-trans,octa-cis-undecaprenyl diphosphate + H2O = di-trans,octa-cis-undecaprenyl phosphate + phosphate + H(+). Its function is as follows. Catalyzes the dephosphorylation of undecaprenyl diphosphate (UPP). Confers resistance to bacitracin. The chain is Undecaprenyl-diphosphatase from Bordetella pertussis (strain Tohama I / ATCC BAA-589 / NCTC 13251).